The primary structure comprises 904 residues: Envelope glycoprotein B (904 aa).

The first 30 residues, 1 to 30 (MRQGAPARGRRWFVVWALLGLTLGVLVASA), serve as a signal peptide directing secretion. Residues 31 to 52 (APSSPGTPGVAAATQAANGGPA) show a composition bias toward low complexity. A disordered region spans residues 31 to 88 (APSSPGTPGVAAATQAANGGPATPAPPAPGAPPTGDPKPKKNRKPKPPKPPRPAGDNA). Residues 31 to 774 (APSSPGTPGV…SGVSSFMSNP (744 aa)) are Virion surface-facing. Residues 53–66 (TPAPPAPGAPPTGD) show a composition bias toward pro residues. Residues 70–79 (KKNRKPKPPK) are compositionally biased toward basic residues. N-linked (GlcNAc...) asparagine; by host glycans are attached at residues asparagine 87 and asparagine 141. Cystine bridges form between cysteine 116/cysteine 573, cysteine 133/cysteine 529, cysteine 207/cysteine 271, cysteine 364/cysteine 412, and cysteine 596/cysteine 633. Involved in fusion and/or binding to host membrane regions lie at residues 173–179 (VWFGHRY) and 258–265 (RVEAFHRY). Asparagine 398 and asparagine 430 each carry an N-linked (GlcNAc...) asparagine; by host glycan. Residues 470 to 492 (REQSRKPPNPTPPPPGASANASV) are disordered. The span at 476–485 (PPNPTPPPPG) shows a compositional bias: pro residues. Asparagine 489 carries N-linked (GlcNAc...) asparagine; by host glycosylation. The N-linked (GlcNAc...) asparagine; by host glycan is linked to asparagine 674. The segment at 719–772 (IDTVIHADANAAMFAGLGAFFEGMGDLGRAVGKVVMGIVGGVVSAVSGVSSFMS) is hydrophobic membrane proximal region. The chain crosses the membrane as a helical span at residues 775 to 795 (FGALAVGLLVLAGLAAAFFAF). Residues 796 to 904 (RYVMRLQSNP…KDGDADEDDL (109 aa)) lie on the Intravirion side of the membrane. Positions 849 to 852 (YMAL) match the Golgi targeting motif. A disordered region spans residues 883 to 904 (KRRNTNYTQVPNKDGDADEDDL). The Internalization motif motif lies at 889-892 (YTQV).

It belongs to the herpesviridae glycoprotein B family. As to quaternary structure, homotrimer; disulfide-linked. Interacts with host receptor MYH9/NMMHC-IIA. Interacts with host receptor MYH10/NMMHC-IIB. Binds to heparan sulfate proteoglycans. Interacts with gH/gL heterodimer. Interacts with host DEFA1, DEFA2 and DEFA3; these interactions inhibit viral infection. In terms of processing, the cytoplasmic tail is phosphorylated by the viral kinase US3. Phosphorylation may be linked to a down-regulation of gB expression on cell surface. Ubiquitinated.

The protein localises to the virion membrane. It is found in the host cell membrane. The protein resides in the host endosome membrane. Its subcellular location is the host Golgi apparatus membrane. In terms of biological role, envelope glycoprotein that forms spikes at the surface of virion envelope and binds to the host cell entry receptors MYH9/NMMHC-IIA and MYH10/NMMHC-IIB, promoting the virus entry into host cells. Essential for the initial attachment to heparan sulfate moieties of the host cell surface proteoglycans. Involved in fusion of viral and cellular membranes leading to virus entry into the host cell: following initial binding to its host cell entry receptors, membrane fusion is mediated by the fusion machinery composed at least of gB and the heterodimer gH/gL. May be involved in the fusion between the virion envelope and the outer nuclear membrane during virion egress. Also plays a role, together with gK, in virus-induced cell-to-cell fusion (syncytia formation). In Homo sapiens (Human), this protein is Envelope glycoprotein B.